The following is a 919-amino-acid chain: Probable dipeptidyl-aminopeptidase B (919 aa).

The span at 1-10 shows a compositional bias: basic and acidic residues; it reads MRRSDGHEET. A disordered region spans residues 1-53; it reads MRRSDGHEETSEFLPMTHSRSVSAASQTSTDSSLSTESLFPREQKPFPNAMGG. The Cytoplasmic portion of the chain corresponds to 1 to 92; the sequence is MRRSDGHEET…AATGGGRARR (92 aa). The segment covering 21–38 has biased composition (low complexity); it reads SVSAASQTSTDSSLSTES. The chain crosses the membrane as a helical; Signal-anchor for type II membrane protein span at residues 93–113; it reads IFWILVLLCLGGWLLAFVLFL. Residues 114–919 are Vacuolar-facing; that stretch reads TGGRANYQTA…MKRSLRLLSP (806 aa). N-linked (GlcNAc...) asparagine glycosylation is found at asparagine 200, asparagine 352, and asparagine 643. Catalysis depends on serine 757, which acts as the Charge relay system. The N-linked (GlcNAc...) asparagine glycan is linked to asparagine 811. Catalysis depends on charge relay system residues aspartate 834 and histidine 867.

Belongs to the peptidase S9B family.

Its subcellular location is the vacuole membrane. The enzyme catalyses Release of an N-terminal dipeptide, Xaa-Yaa-|-Zaa-, from a polypeptide, preferentially when Yaa is Pro, provided Zaa is neither Pro nor hydroxyproline.. Functionally, type IV dipeptidyl-peptidase which removes N-terminal dipeptides sequentially from polypeptides having unsubstituted N-termini provided that the penultimate residue is proline. This is Probable dipeptidyl-aminopeptidase B (dapB) from Aspergillus fumigatus (strain CBS 144.89 / FGSC A1163 / CEA10) (Neosartorya fumigata).